The primary structure comprises 324 residues: Serine racemase (324 aa).

ATP-binding residues include Ser-32, Lys-51, and Thr-52. Lys-56 acts as the Proton acceptor in catalysis. At Lys-56 the chain carries N6-(pyridoxal phosphate)lysine. Thr-78 contacts Ca(2+). The active-site Proton acceptor is Ser-81. Pyridoxal 5'-phosphate is bound at residue Asn-83. Residues Gln-86 and Tyr-118 each coordinate ATP. Position 175 (Asp-175) interacts with Mg(2+). Pyridoxal 5'-phosphate-binding residues include Gly-182, Gly-183, Gly-184, and Gly-185. Residues Glu-207, Ala-211, and Asp-213 each coordinate Ca(2+). Positions 207, 211, and 213 each coordinate Mg(2+). Residues Glu-207, Ala-211, and Asp-213 each coordinate Mn(2+). ATP is bound at residue Lys-277. Ser-310 serves as a coordination point for pyridoxal 5'-phosphate. Asn-313 lines the ATP pocket.

It belongs to the serine/threonine dehydratase family. Homodimer. Mg(2+) serves as cofactor. Mn(2+) is required as a cofactor. The cofactor is Ca(2+). Requires pyridoxal 5'-phosphate as cofactor.

The catalysed reaction is L-serine = D-serine. It carries out the reaction L-serine = pyruvate + NH4(+). The enzyme catalyses D-serine = pyruvate + NH4(+). Functionally, catalyzes the synthesis of D-serine from L-serine. Has dehydratase activity towards both L-serine and D-serine. The sequence is that of Serine racemase (srr) from Dictyostelium discoideum (Social amoeba).